Here is a 651-residue protein sequence, read N- to C-terminus: Mitochondrial sodium/calcium exchanger protein (651 aa).

A helical membrane pass occupies residues 51 to 71 (VILIILGILYLIILFVIMSSI). Residues 72–91 (ADDFFCPAISGIVSHLRMSE) are Cytoplasmic-facing. The helical transmembrane segment at 92–112 (SIAGVTFLAFGNGAPDVFSSI) threads the bilayer. Over 113–126 (SSVLTTPKPKADLA) the chain is Extracellular. A helical transmembrane segment spans residues 127–147 (LGDLFGTSIFVTTVVLAIIIF). Residues 148–161 (TKSFKVAIIPTLRD) are Cytoplasmic-facing. Residues 162–182 (LIFYMTTLAFIVFCFLKFDKI) traverse the membrane as a helical segment. Glu183 is a topological domain (extracellular). The chain crosses the membrane as a helical span at residues 184-204 (VWMPATFLGIYGVYVVTVIIL). The Cytoplasmic segment spans residues 205 to 398 (GIYRTHRKKR…PSRDEFSEMN (194 aa)). A helical membrane pass occupies residues 399–419 (IFIKIVTVIKVVPVFFFKLTV). The Extracellular portion of the chain corresponds to 420 to 428 (PSNEMSWCK). A helical transmembrane segment spans residues 429–449 (PLFILHCFASIQFALFSIQII). The Cytoplasmic portion of the chain corresponds to 450–458 (TLKPFDGSP). Residues 459–479 (GLWLYGLGFSAILAMVAMYFL) form a helical membrane-spanning segment. Residues 480-486 (PLSKEQK) lie on the Extracellular side of the membrane. A helical transmembrane segment spans residues 487-507 (YYKEIYSYLGFLMSIAWIYAT). The Cytoplasmic segment spans residues 508 to 510 (SNE). Residues 511-531 (IVSVVTMIGVVTGLSMELLGL) form a helical membrane-spanning segment. Residues 532-559 (TIMAWSNCIGDIVADIAVVKQGYPKMAM) lie on the Extracellular side of the membrane. The chain crosses the membrane as a helical span at residues 560–580 (AAAIGGPLFNLLIGFGLPFTI). Topologically, residues 581–595 (AAAQGKEMELLINPV) are cytoplasmic. Residues 596–616 (YRLLMLFLGISLVTTFVALFI) form a helical membrane-spanning segment. The Extracellular portion of the chain corresponds to 617–626 (QRFTVRRPHA). Residues 627 to 647 (VLLIFIFVVFLIFICLAEFHV) traverse the membrane as a helical segment. The Cytoplasmic segment spans residues 648–651 (LEWN).

The protein belongs to the Ca(2+):cation antiporter (CaCA) (TC 2.A.19) family. SLC24A subfamily. Expressed in the seam cells of the organism. Expression is visible in the seam cells across all larval stages, and expression persists into the adult stage of the organism.

It is found in the mitochondrion inner membrane. Its activity is regulated as follows. Inhibited by the sodium/calcium exchanger inhibitor CGP-37157. Mitochondrial sodium/calcium antiporter that mediates sodium-dependent calcium efflux from mitochondrion, thereby acting as a key regulator of mitochondrion calcium homeostasis. Required for patterning of neural circuits: functions in the same pathway as RAC-dependent effectors of the unc-6/netrin signaling pathway to set left/ right patterning of the VD/DD GABAergic circuit. The polypeptide is Mitochondrial sodium/calcium exchanger protein (Caenorhabditis elegans).